Consider the following 512-residue polypeptide: Maturase K (512 aa).

The protein belongs to the intron maturase 2 family. MatK subfamily.

The protein localises to the plastid. It localises to the chloroplast. Usually encoded in the trnK tRNA gene intron. Probably assists in splicing its own and other chloroplast group II introns. The chain is Maturase K from Lemna aequinoctialis (Lesser duckweed).